We begin with the raw amino-acid sequence, 217 residues long: Ribonuclease T (217 aa).

The Exonuclease domain maps to 20-194 (VVIDVETGGF…YDTDRTAELF (175 aa)). Mg(2+)-binding residues include aspartate 23, glutamate 25, histidine 181, and aspartate 186. Histidine 181 functions as the Proton donor/acceptor in the catalytic mechanism.

It belongs to the RNase T family. In terms of assembly, homodimer. Mg(2+) serves as cofactor.

In terms of biological role, trims short 3' overhangs of a variety of RNA species, leaving a one or two nucleotide 3' overhang. Responsible for the end-turnover of tRNA: specifically removes the terminal AMP residue from uncharged tRNA (tRNA-C-C-A). Also appears to be involved in tRNA biosynthesis. The protein is Ribonuclease T of Photorhabdus laumondii subsp. laumondii (strain DSM 15139 / CIP 105565 / TT01) (Photorhabdus luminescens subsp. laumondii).